We begin with the raw amino-acid sequence, 758 residues long: UPF0313 protein CV_1738 (758 aa).

The Radical SAM core domain occupies 377–642 (AWEMIKYSVN…VDVVRDGYRR (266 aa)). Residues Cys-391, Cys-395, and Cys-398 each contribute to the [4Fe-4S] cluster site. Positions 698–758 (GAPMNRGKSP…KPGGKTSRSR (61 aa)) are disordered. Residues 727–737 (RGQGGQGGRPG) show a composition bias toward gly residues.

This sequence belongs to the UPF0313 family. [4Fe-4S] cluster is required as a cofactor.

The chain is UPF0313 protein CV_1738 from Chromobacterium violaceum (strain ATCC 12472 / DSM 30191 / JCM 1249 / CCUG 213 / NBRC 12614 / NCIMB 9131 / NCTC 9757 / MK).